The sequence spans 425 residues: Serine--tRNA ligase (425 aa).

2 disordered regions span residues 43 to 68 (QRSS…GSDP) and 108 to 131 (LPNL…RHCW). Positions 117–131 (PEGRDENDNQERHCW) are enriched in basic and acidic residues. 233–235 (TAE) contributes to the L-serine binding site. ATP is bound at residue 264–266 (RRE). Glutamate 287 is a binding site for L-serine. 351–354 (EISS) provides a ligand contact to ATP. Serine 385 provides a ligand contact to L-serine.

This sequence belongs to the class-II aminoacyl-tRNA synthetase family. Type-1 seryl-tRNA synthetase subfamily. In terms of assembly, homodimer. The tRNA molecule binds across the dimer.

Its subcellular location is the cytoplasm. The catalysed reaction is tRNA(Ser) + L-serine + ATP = L-seryl-tRNA(Ser) + AMP + diphosphate + H(+). It catalyses the reaction tRNA(Sec) + L-serine + ATP = L-seryl-tRNA(Sec) + AMP + diphosphate + H(+). It functions in the pathway aminoacyl-tRNA biosynthesis; selenocysteinyl-tRNA(Sec) biosynthesis; L-seryl-tRNA(Sec) from L-serine and tRNA(Sec): step 1/1. Catalyzes the attachment of serine to tRNA(Ser). Is also able to aminoacylate tRNA(Sec) with serine, to form the misacylated tRNA L-seryl-tRNA(Sec), which will be further converted into selenocysteinyl-tRNA(Sec). The protein is Serine--tRNA ligase of Prochlorococcus marinus (strain MIT 9303).